We begin with the raw amino-acid sequence, 248 residues long: tRNA (guanine-N(1)-)-methyltransferase (248 aa).

S-adenosyl-L-methionine is bound by residues G114 and 134-139 (IGDYVL).

Belongs to the RNA methyltransferase TrmD family. As to quaternary structure, homodimer.

It is found in the cytoplasm. The catalysed reaction is guanosine(37) in tRNA + S-adenosyl-L-methionine = N(1)-methylguanosine(37) in tRNA + S-adenosyl-L-homocysteine + H(+). Its function is as follows. Specifically methylates guanosine-37 in various tRNAs. The protein is tRNA (guanine-N(1)-)-methyltransferase of Blochmanniella floridana.